We begin with the raw amino-acid sequence, 391 residues long: GATA-binding factor 6-A (391 aa).

Positions 57 to 111 (GAHSVNSHWSQATSESSSFNNSSPHTSSRYHYPPSPPMHNGSTRDTGYSSSLTVS) are disordered. Residues 66–83 (SQATSESSSFNNSSPHTS) are compositionally biased toward low complexity. A compositionally biased stretch (polar residues) spans 96-111 (NGSTRDTGYSSSLTVS). GATA-type zinc fingers lie at residues 182–206 (CVNCGSVQTPLWRRDGTGHFLCNAC) and 236–260 (CANCHTSTTTLWRRNTEGEPVCNAC). Residues 274–355 (AMKKEGIQTR…TESTSPNSNT (82 aa)) are disordered. Basic residues predominate over residues 282 to 291 (TRKRKPKTLN). Residues 292–319 (KSKSSSSNGNSSHQISMTPTSTTSSTNS) show a composition bias toward low complexity. Polar residues predominate over residues 326–355 (GSPSQNTTPVVASSLMSTQQTESTSPNSNT).

As to expression, in embryos, expressed in the presumptive heart mesoderm. In adults, expressed at high levels in heart, small intestine, and stomach and at lower levels in lung, pancreas and colon.

It localises to the nucleus. Its function is as follows. Transcriptional activator that binds 5'-GATA-3'-containing motifs within gene promoters. Regulates cardiac-specific transcription during embryogenesis and thereby cardiogenesis. This Xenopus laevis (African clawed frog) protein is GATA-binding factor 6-A (gata6-a).